The chain runs to 382 residues: Galactokinase (382 aa).

34–37 contacts substrate; the sequence is EHTD. Position 124–130 (124–130) interacts with ATP; sequence GAGLSSS. 2 residues coordinate Mg(2+): Ser130 and Glu162. Asp174 functions as the Proton acceptor in the catalytic mechanism. Position 223 (Tyr223) interacts with substrate.

It belongs to the GHMP kinase family. GalK subfamily.

Its subcellular location is the cytoplasm. It catalyses the reaction alpha-D-galactose + ATP = alpha-D-galactose 1-phosphate + ADP + H(+). Its pathway is carbohydrate metabolism; galactose metabolism. In terms of biological role, catalyzes the transfer of the gamma-phosphate of ATP to D-galactose to form alpha-D-galactose-1-phosphate (Gal-1-P). The chain is Galactokinase from Salmonella schwarzengrund (strain CVM19633).